Consider the following 346-residue polypeptide: MFGATQSTNRMNDFEVASPPDDSVSALEFSPSTVQKNFLVAGSWDSTVRCWEVEQNGATVPKSMKTMGGPVLDVCWSDDGSKVFVASCDKQVKLWDLASDQVMQVAAHDGPVKTCHMVKGPTYTCLMTGSWDKTLKFWDTRSPNPMMTINLPERCYCADVEYPMAVVGTANRGLIIYSLQNSPTEYKRQESPLKYQHRAISIFRDKKKEPTGCALGSIEGRVAIQYVNPGNPKDNFTFKCHRTTGTSGYQDIYAVNDIAFHPVHGTLVTVGSDGTFSFWDKDARTKLKSSETMDQSITKCGFNANGQIFAYAVGYDWSKGHEYFNPAKKPQIFLRSCYDELKPRIN.

4 WD repeats span residues 17-61 (ASPP…ATVP), 64-105 (MKTM…VMQV), 126-148 (LMTG…PMMT), and 255-289 (VNDI…KLKS).

This sequence belongs to the WD repeat rae1 family. Interacts with hiw; the interaction with Rae1 may protect hiw from autophagy-mediated degradation. Interacts with Nup98-96. In terms of tissue distribution, head (at protein level).

The protein localises to the cytoplasm. The protein resides in the perinuclear region. Its subcellular location is the nucleus. It is found in the nucleus envelope. It localises to the chromosome. In terms of biological role, probable component of the nuclear pore complex (NPC) which regulates the nuclear export of specific mRNAs and promotes cell cycle progression during mitosis and male meiosis. Acts with Nup98-96 to promote the nuclear export of specific mRNAs such as Moe, however it does not appear to be required for general nuclear mRNA transport. Essential mitotic and male meiotic cell cycle regulator with roles in many aspects of the cell cycle including chromatin organization and condensation, spindle assembly, chromosome segregation, and maintaining nuclear structure. During male meiosis it is required for completion of meiosis I, as well as accurate cytokinesis of the secondary spermatocytes, and postmeiotic differentiation of spermatids. Acts as a downstream regulatory target of the Hippo/SWH (Sav/Wts/Hpo) signaling pathway to promote mitotic cell cycle progression and proliferation during wing and eye development, and thereby plays a key role in integrating the regulation of proliferation with organ size control. When the Hippo/SWH signaling pathway is inactive, Rae1 acts independently of yki to increase organ size by promoting mitotic S-phase entry and increase cellular proliferation. When the Hippo/SWH signaling pathway is active it inhibits the activity of Rae1 in a Wts-dependent manner to restrict organ growth. However, Rae1 is also able to negatively regulate the levels and activity of yki likely by activating the core kinases of the Hippo/SWH signaling pathway hpo and Wts and increasing the protein levels of hpo, Mer and Wts; it is therefore likely that it functions as part of a negative feedback loop with the Hippo/SWH signaling pathway to regulate pathway homeostasis and prevent organ overgrowth. Promotes mitotic cell cycle progression, at least in part, by increasing the accumulation of mitotic cyclins such as CycB, possibly by directly up-regulating cyclin transcripts or by inhibiting the anaphase promoting complex/cyclosome (APC/C) activator fzy. Also required in presynaptic, postmitotic motor neurons to restrain synaptic terminal growth. Promotes the expression and stability of the an E3 ubiquitin ligase of hiw, and is likely to function in the regulation of synaptic growth by binding to hiw and protecting it from autophagy-mediated degradation. The sequence is that of Protein Rae1 from Drosophila melanogaster (Fruit fly).